A 332-amino-acid polypeptide reads, in one-letter code: Phosphoenolpyruvate transferase (332 aa).

7,8-didemethyl-8-hydroxy-5-deazariboflavin is bound at residue Asp-63.

It belongs to the CofD family. Homodimer. Requires Mg(2+) as cofactor.

It carries out the reaction enolpyruvoyl-2-diphospho-5'-guanosine + 7,8-didemethyl-8-hydroxy-5-deazariboflavin = dehydro coenzyme F420-0 + GMP + H(+). It participates in cofactor biosynthesis; coenzyme F420 biosynthesis. Functionally, catalyzes the transfer of the phosphoenolpyruvate moiety from enoylpyruvoyl-2-diphospho-5'-guanosine (EPPG) to 7,8-didemethyl-8-hydroxy-5-deazariboflavin (FO) with the formation of dehydro coenzyme F420-0 and GMP. The polypeptide is Phosphoenolpyruvate transferase (Nocardia farcinica (strain IFM 10152)).